The following is a 222-amino-acid chain: UPF0502 protein Shewmr4_1554 (222 aa).

Polar residues predominate over residues 175–193 (SLSADSPSAGSNSLNAQDR). The interval 175-194 (SLSADSPSAGSNSLNAQDRQ) is disordered.

It belongs to the UPF0502 family.

In Shewanella sp. (strain MR-4), this protein is UPF0502 protein Shewmr4_1554.